We begin with the raw amino-acid sequence, 106 residues long: Small ribosomal subunit protein uS10 (106 aa).

This sequence belongs to the universal ribosomal protein uS10 family. As to quaternary structure, part of the 30S ribosomal subunit.

Functionally, involved in the binding of tRNA to the ribosomes. This is Small ribosomal subunit protein uS10 from Solibacter usitatus (strain Ellin6076).